A 201-amino-acid chain; its full sequence is Small ribosomal subunit protein uS4c (201 aa).

One can recognise an S4 RNA-binding domain in the interval Met89–Asn150.

This sequence belongs to the universal ribosomal protein uS4 family. In terms of assembly, part of the 30S ribosomal subunit. Contacts protein S5. The interaction surface between S4 and S5 is involved in control of translational fidelity.

The protein localises to the plastid. The protein resides in the chloroplast. One of the primary rRNA binding proteins, it binds directly to 16S rRNA where it nucleates assembly of the body of the 30S subunit. Functionally, with S5 and S12 plays an important role in translational accuracy. This Phalaenopsis aphrodite subsp. formosana (Moth orchid) protein is Small ribosomal subunit protein uS4c (rps4).